Here is a 531-residue protein sequence, read N- to C-terminus: uncharacterized protein (531 aa).

The first 28 residues, 1-28 (MNTKGIIAKLTAGALIANLLICPANTLA), serve as a signal peptide directing secretion. 3 consecutive SLH domains span residues 29–85 (EKKT…QINK), 86–149 (QAKP…IGDL), and 150–210 (PTQF…SKRM). One can recognise a MurNAc-LAA domain in the interval 335-517 (IIIDPGHGGI…AAEAIYAGIL (183 aa)).

The protein in the C-terminal section; belongs to the N-acetylmuramoyl-L-alanine amidase 3 family.

The protein localises to the secreted. It localises to the cell wall. It is found in the S-layer. This is an uncharacterized protein from Bacillus anthracis.